Here is a 512-residue protein sequence, read N- to C-terminus: Transactivator/viroplasmin protein (512 aa).

2 disordered regions span residues 76–123 (GNER…NPVA) and 474–512 (ADSS…IPSI). A compositionally biased stretch (polar residues) spans 476–487 (SSSTSGEQNNVE). Over residues 499–512 (YDERSDDHKRIPSI) the composition is skewed to basic and acidic residues.

This sequence belongs to the caulimoviridae viroplasmin family.

Its subcellular location is the host cytoplasm. Its function is as follows. Enhances the translation of downstream ORFs on polycistronic mRNAs derived from figwort mosaic virus. The sequence is that of Transactivator/viroplasmin protein from Figwort mosaic virus (strain DxS) (FMV).